A 448-amino-acid polypeptide reads, in one-letter code: Exodeoxyribonuclease 7 large subunit (448 aa).

The protein belongs to the XseA family. In terms of assembly, heterooligomer composed of large and small subunits.

It is found in the cytoplasm. The catalysed reaction is Exonucleolytic cleavage in either 5'- to 3'- or 3'- to 5'-direction to yield nucleoside 5'-phosphates.. In terms of biological role, bidirectionally degrades single-stranded DNA into large acid-insoluble oligonucleotides, which are then degraded further into small acid-soluble oligonucleotides. The sequence is that of Exodeoxyribonuclease 7 large subunit from Photobacterium profundum (strain SS9).